The following is a 292-amino-acid chain: Ribosomal protein L11 methyltransferase (292 aa).

S-adenosyl-L-methionine contacts are provided by Thr-138, Gly-159, Asp-181, and Asn-225.

It belongs to the methyltransferase superfamily. PrmA family.

The protein localises to the cytoplasm. The enzyme catalyses L-lysyl-[protein] + 3 S-adenosyl-L-methionine = N(6),N(6),N(6)-trimethyl-L-lysyl-[protein] + 3 S-adenosyl-L-homocysteine + 3 H(+). Its function is as follows. Methylates ribosomal protein L11. This is Ribosomal protein L11 methyltransferase from Leuconostoc citreum (strain KM20).